The following is a 69-amino-acid chain: Dodecin (69 aa).

3-5 (KVY) is an FMN binding site. Residues K6, R28, and 32–34 (TLR) contribute to the CoA site. FMN contacts are provided by D37, W38, R45, Q57, and R65. Position 65–67 (65–67 (RLE)) interacts with CoA.

This sequence belongs to the dodecin family. As to quaternary structure, homododecamer; four homotrimers assemble to form a dodecameric hollow sphere with an outer diameter of about 60 Angstroms. Flavin dimers are bound between subunits with a stoichiometry of 6 flavin dimers per dodecamer. Besides, trimeric coenzyme A molecules can be bound between subunits. A dodecamer can bind simultaneously 12 flavin and 12 coenzyme A molecules.

In terms of biological role, may function as storage protein that sequesters various flavins and other cofactors, thereby protecting the cell against undesirable reactions mediated by the free cofactors. Binds and sequesters FMN, FAD, lumiflavin and lumichrome, and can also bind coenzyme A. This chain is Dodecin, found in Thermus thermophilus (strain ATCC 27634 / DSM 579 / HB8).